Consider the following 328-residue polypeptide: Protease HtpX homolog (328 aa).

2 helical membrane passes run 6 to 26 (TAMLLAFMTALFMGVGYLIGG) and 28 to 48 (SGMMIAFVAAAGMNFFSYWNS). A Zn(2+)-binding site is contributed by His130. Residue Glu131 is part of the active site. A Zn(2+)-binding site is contributed by His134. The next 2 helical transmembrane spans lie at 145–165 (ITATLAGAISMLGNFAFFFGG) and 172–192 (PLGAIGVLAAMIVAPLAAMLV). Glu201 is a Zn(2+) binding site. The disordered stretch occupies residues 279–328 (QYGGGTGPSVGTPTRSGSTGPAMTANPERKSRSVPNTGRGGSQPPKGPWS). Over residues 287 to 299 (SVGTPTRSGSTGP) the composition is skewed to low complexity.

This sequence belongs to the peptidase M48B family. Zn(2+) serves as cofactor.

It localises to the cell inner membrane. This chain is Protease HtpX homolog, found in Rhizobium rhizogenes (strain K84 / ATCC BAA-868) (Agrobacterium radiobacter).